We begin with the raw amino-acid sequence, 431 residues long: Histidinol dehydrogenase (431 aa).

The NAD(+) site is built by Tyr-127, Gln-185, and Asn-208. Residues Ser-234, Gln-256, and His-259 each coordinate substrate. Gln-256 and His-259 together coordinate Zn(2+). Residues Glu-323 and His-324 each act as proton acceptor in the active site. Substrate contacts are provided by His-324, Asp-357, Glu-411, and His-416. Residue Asp-357 coordinates Zn(2+). His-416 provides a ligand contact to Zn(2+).

Belongs to the histidinol dehydrogenase family. Zn(2+) serves as cofactor.

The enzyme catalyses L-histidinol + 2 NAD(+) + H2O = L-histidine + 2 NADH + 3 H(+). It participates in amino-acid biosynthesis; L-histidine biosynthesis; L-histidine from 5-phospho-alpha-D-ribose 1-diphosphate: step 9/9. In terms of biological role, catalyzes the sequential NAD-dependent oxidations of L-histidinol to L-histidinaldehyde and then to L-histidine. This chain is Histidinol dehydrogenase, found in Vibrio parahaemolyticus serotype O3:K6 (strain RIMD 2210633).